Here is a 1061-residue protein sequence, read N- to C-terminus: TonB-dependent transporter Oar (1061 aa).

An N-terminal signal peptide occupies residues 1-26; it reads MHLNRVLRETGVVVAAGLLYGSAAFA. Residues 121–243 form the TBDR plug domain; sequence EIVGAPPTID…TGGVINAVTR (123 aa). The region spanning 248–1061 is the TBDR beta-barrel domain; it reads EFHGSVFANW…QVRFGIRYTF (814 aa). A disordered region spans residues 701-722; sequence RSLAEPGQGTATSCDPSSFESQ. Residues 709-722 show a composition bias toward polar residues; it reads GTATSCDPSSFESQ.

It belongs to the TonB-dependent receptor family. In terms of assembly, interacts with TonB. Part of a transport system composed of the outer membrane transporter Oar, the trans-periplasmic binding protein TonB and the inner membrane proteins ExbB and ExbD.

It localises to the cell outer membrane. Its function is as follows. Required for secretion of the protease PopC across the bacterial outer membrane. Binds and probably transports PopC from the periplasm to the extracellular milieu. It derives its energy for transport by interacting with the trans-periplasmic membrane protein TonB. Required for cellular adhesion during fruiting body formation, a multicellular developmental program that is induced in response to starvation. The polypeptide is TonB-dependent transporter Oar (Myxococcus xanthus).